The primary structure comprises 1528 residues: Rho GTPase-activating protein 7 (1528 aa).

Disordered stretches follow at residues 72 to 94 (DFPGRPMGHLSKDVDENDSHEGE), 288 to 310 (MSAENGLEKSGFSQHQNKSPPKV), and 372 to 436 (ALST…TKPK). Positions 81 to 94 (LSKDVDENDSHEGE) are enriched in basic and acidic residues. Residues 374–384 (STSSSPSGTPT) are compositionally biased toward low complexity. A compositionally biased stretch (polar residues) spans 396–436 (GSESGADTISVNQTRVNLSSDTESTDLPSSTPVANSGTKPK). Residues 448–515 (KAEIEAKEAC…LNKCAVMKLE (68 aa)) form the SAM domain. A phosphoserine mark is found at Ser-523, Ser-526, and Ser-566. Disordered stretches follow at residues 558–617 (PKQD…ATPR), 732–764 (RSVSNSTQTSSSSSQSETSSAVSTPSPVTRTRS), 829–876 (PSGN…SSRL), and 928–990 (SDEG…GVGA). 2 stretches are compositionally biased toward low complexity: residues 591–605 (VSSVRSLSSTGSLPS) and 734–760 (VSNSTQTSSSSSQSETSSAVSTPSPVT). The segment at 710 to 884 (QLNCVEISAL…RLSIYDNVPG (175 aa)) is focal adhesion-targeting (FAT). The residue at position 757 (Ser-757) is a Phosphoserine. A compositionally biased stretch (basic and acidic residues) spans 851–862 (LRRENSSDSPKE). Positions 936–948 (ALDSVSPCPSSPK) are enriched in polar residues. A compositionally biased stretch (basic and acidic residues) spans 950–960 (IHLDVDNDRTT). The segment covering 961–972 (PSDLDSTGNSLN) has biased composition (polar residues). A polybasic cluster (PBR) region spans residues 1051–1073 (KHGFSWAVPKFMKRIKVPDYKDR). The region spanning 1078–1284 (VPLTVNVQRT…HMIAECKKLF (207 aa)) is the Rho-GAP domain. The 208-residue stretch at 1314–1521 (GNDDSADYQH…RDSFSNQNTE (208 aa)) folds into the START domain.

Interacts with EF1A1, facilitates EF1A1 distribution to the membrane periphery and ruffles upon growth factor stimulation and suppresses cell migration. Interacts with tensin TNS1 (via N-terminus); the interaction is decreased by phosphorylation of TNS1. Interacts with TNS3 and PTEN; in resting cells, interacts with TNS3 (via C2 tensin-type domain) but, following growth factor stimulation, TNS3 and PTEN are phosphorylated which leads to weakened interaction with TNS3 and enhanced interaction with PTEN. Interacts (via C-terminus) with tensin TNS4 (via SH2 domain); the interaction is independent of tyrosine phosphorylation of DLC1. In terms of tissue distribution, highest level of expression in the spleen, with rather lower levels in prostate, testis, ovary, small intestine and colon, but none in the thymus.

It is found in the cytoplasm. The protein resides in the cell junction. The protein localises to the focal adhesion. It localises to the membrane. In terms of biological role, functions as a GTPase-activating protein for the small GTPases RHOA, RHOB, RHOC and CDC42, terminating their downstream signaling. This induces morphological changes and detachment through cytoskeletal reorganization, playing a critical role in biological processes such as cell migration and proliferation. Also functions in vivo as an activator of the phospholipase PLCD1. Active DLC1 increases cell migration velocity but reduces directionality. Required for growth factor-induced epithelial cell migration; in resting cells, interacts with TNS3 while PTEN interacts with the p85 regulatory subunit of the PI3K kinase complex but growth factor stimulation induces phosphorylation of TNS3 and PTEN, causing them to change their binding preference so that PTEN interacts with DLC1 and TNS3 interacts with p85. The PTEN-DLC1 complex translocates to the posterior of migrating cells to activate RHOA while the TNS3-p85 complex translocates to the leading edge of migrating cells to promote RAC1 activation. The protein is Rho GTPase-activating protein 7 (DLC1) of Homo sapiens (Human).